Reading from the N-terminus, the 213-residue chain is Probable germin-like protein subfamily 2 member 5 (213 aa).

Positions Met-1–Ala-22 are cleaved as a signal peptide. A disulfide bridge connects residues Cys-29 and Cys-44. One can recognise a Cupin type-1 domain in the interval Lys-58–Lys-203. The N-linked (GlcNAc...) asparagine glycan is linked to Asn-67. Positions 106, 108, 113, and 152 each coordinate Mn(2+).

This sequence belongs to the germin family. In terms of assembly, oligomer (believed to be a pentamer but probably hexamer).

The protein localises to the secreted. The protein resides in the extracellular space. Its subcellular location is the apoplast. Functionally, may play a role in plant defense. Probably has no oxalate oxidase activity even if the active site is conserved. The chain is Probable germin-like protein subfamily 2 member 5 from Arabidopsis thaliana (Mouse-ear cress).